A 389-amino-acid polypeptide reads, in one-letter code: Cytochrome oxidase assembly protein SHY1 (389 aa).

The Mitochondrial matrix segment spans residues methionine 1–lysine 71. Residues isoleucine 72 to valine 92 traverse the membrane as a helical segment. At arginine 93–histidine 341 the chain is on the mitochondrial intermembrane side. A disordered region spans residues glycine 292 to threonine 311. The helical transmembrane segment at leucine 342–alanine 362 threads the bilayer. The Mitochondrial matrix segment spans residues leucine 363–methionine 389.

The protein belongs to the SURF1 family. Interacts with COA1, COX14 and MSS51.

The protein resides in the mitochondrion inner membrane. In terms of biological role, required for efficient assembly of cytochrome c oxidase in the mitochondrial inner membrane. Involved in a step that couples MSS51-COX14-dependent regulation of COX1 translation to early steps of cytochrome c oxidase assembly. The protein is Cytochrome oxidase assembly protein SHY1 (SHY1) of Saccharomyces cerevisiae (strain ATCC 204508 / S288c) (Baker's yeast).